The chain runs to 605 residues: Cell wall integrity and stress response component 4 (605 aa).

A signal peptide spans 1 to 26 (MQTSMVSAKVSIWLVCSVICSSLVRA). One can recognise a WSC domain in the interval 27–110 (TQSVCSSQNT…DKDLFGYIYL (84 aa)). Residues 151 to 305 (SPTLTSTSTT…PSSTTVTYTS (155 aa)) are disordered. N-linked (GlcNAc...) asparagine glycosylation is found at Asn340, Asn386, Asn389, and Asn398. The span at 381–399 (RITNNNNSNTTNSNTPTNK) shows a compositional bias: low complexity. Residues 381–404 (RITNNNNSNTTNSNTPTNKSTEKK) are disordered. The chain crosses the membrane as a helical span at residues 415–435 (ATFVVVGVVCLVIICILIYLI). N-linked (GlcNAc...) asparagine glycosylation is present at Asn479. The disordered stretch occupies residues 494–521 (GQIMSESPSPRQSTYSLTAGSPPNDPST). Residues 497–521 (MSESPSPRQSTYSLTAGSPPNDPST) show a composition bias toward polar residues. Asn553 and Asn583 each carry an N-linked (GlcNAc...) asparagine glycan.

Its subcellular location is the membrane. The chain is Cell wall integrity and stress response component 4 (WSC4) from Saccharomyces cerevisiae (strain ATCC 204508 / S288c) (Baker's yeast).